The primary structure comprises 426 residues: Serine hydroxymethyltransferase (426 aa).

Residues L111 and 115–117 (GHL) each bind (6S)-5,6,7,8-tetrahydrofolate. Residue K220 is modified to N6-(pyridoxal phosphate)lysine.

This sequence belongs to the SHMT family. In terms of assembly, homodimer. Pyridoxal 5'-phosphate serves as cofactor.

Its subcellular location is the cytoplasm. It carries out the reaction (6R)-5,10-methylene-5,6,7,8-tetrahydrofolate + glycine + H2O = (6S)-5,6,7,8-tetrahydrofolate + L-serine. Its pathway is one-carbon metabolism; tetrahydrofolate interconversion. It functions in the pathway amino-acid biosynthesis; glycine biosynthesis; glycine from L-serine: step 1/1. Its function is as follows. Catalyzes the reversible interconversion of serine and glycine with tetrahydrofolate (THF) serving as the one-carbon carrier. This reaction serves as the major source of one-carbon groups required for the biosynthesis of purines, thymidylate, methionine, and other important biomolecules. Also exhibits THF-independent aldolase activity toward beta-hydroxyamino acids, producing glycine and aldehydes, via a retro-aldol mechanism. The polypeptide is Serine hydroxymethyltransferase (Orientia tsutsugamushi (strain Ikeda) (Rickettsia tsutsugamushi)).